An 88-amino-acid chain; its full sequence is Beta-insect excitatory toxin LqhIT1a (88 aa).

Positions 1–18 (MKFFLLFLVVLPIMGVLG) are cleaved as a signal peptide. One can recognise an LCN-type CS-alpha/beta domain in the interval 20 to 83 (KNGYAVDSKG…ISGTTKKYCD (64 aa)). 4 cysteine pairs are disulfide-bonded: cysteine 34/cysteine 55, cysteine 40/cysteine 60, cysteine 44/cysteine 62, and cysteine 56/cysteine 82.

The protein belongs to the long (4 C-C) scorpion toxin superfamily. Sodium channel inhibitor family. Beta subfamily. As to expression, expressed by the venom gland.

It is found in the secreted. In terms of biological role, excitatory insect toxins induce a spastic paralysis. They bind voltage-independently at site-4 of sodium channels (Nav) and shift the voltage of activation toward more negative potentials thereby affecting sodium channel activation and promoting spontaneous and repetitive firing. The chain is Beta-insect excitatory toxin LqhIT1a from Leiurus hebraeus (Hebrew deathstalker scorpion).